The chain runs to 878 residues: Alanine--tRNA ligase (878 aa).

Positions 564, 568, 665, and 669 each coordinate Zn(2+).

Belongs to the class-II aminoacyl-tRNA synthetase family. Requires Zn(2+) as cofactor.

It is found in the cytoplasm. It catalyses the reaction tRNA(Ala) + L-alanine + ATP = L-alanyl-tRNA(Ala) + AMP + diphosphate. Catalyzes the attachment of alanine to tRNA(Ala) in a two-step reaction: alanine is first activated by ATP to form Ala-AMP and then transferred to the acceptor end of tRNA(Ala). Also edits incorrectly charged Ser-tRNA(Ala) and Gly-tRNA(Ala) via its editing domain. The protein is Alanine--tRNA ligase of Natranaerobius thermophilus (strain ATCC BAA-1301 / DSM 18059 / JW/NM-WN-LF).